A 124-amino-acid chain; its full sequence is Large ribosomal subunit protein bL12 (124 aa).

It belongs to the bacterial ribosomal protein bL12 family. In terms of assembly, homodimer. Part of the ribosomal stalk of the 50S ribosomal subunit. Forms a multimeric L10(L12)X complex, where L10 forms an elongated spine to which 2 to 4 L12 dimers bind in a sequential fashion. Binds GTP-bound translation factors.

Functionally, forms part of the ribosomal stalk which helps the ribosome interact with GTP-bound translation factors. Is thus essential for accurate translation. This chain is Large ribosomal subunit protein bL12, found in Leptothrix cholodnii (strain ATCC 51168 / LMG 8142 / SP-6) (Leptothrix discophora (strain SP-6)).